Consider the following 379-residue polypeptide: F-box protein At5g18160 (379 aa).

The disordered stretch occupies residues 1–26 (MDKQDEKKQGTTKSSSTLTTRCSHGN). Polar residues predominate over residues 11–26 (TTKSSSTLTTRCSHGN). In terms of domain architecture, F-box spans 28–74 (ISQSNSIPLDITIEILSRLPAKSIVRSRSVSKLWSSITTTPEFIKHR).

The protein is F-box protein At5g18160 of Arabidopsis thaliana (Mouse-ear cress).